Consider the following 161-residue polypeptide: MDDIYKAAVEQLTEEQKNEFKAAFDIFVLGAEDGCISTKELGKVMRMLGQNPTPEELQEMIDEVDEDGSGTVDFDEFLVMMVRCMKDDSKGKSEEELSDLFRMFDKNADGYIDLEELKIMLQATGETITEDDIEELMKDGDKNNDGRIDYDEFLEFMKGVE.

At Met-1 the chain carries N-acetylmethionine. EF-hand domains follow at residues 16–51 (QKNE…LGQN), 52–87 (PTPE…CMKD), 92–127 (KSEE…TGET), and 128–161 (ITED…KGVE). Ca(2+) is bound by residues Asp-65, Asp-67, Ser-69, Thr-71, and Glu-76. A Phosphoserine modification is found at Ser-98. Ca(2+)-binding residues include Asp-105, Asn-107, Asp-109, Tyr-111, Glu-116, Asp-141, Asn-143, Asp-145, Arg-147, and Glu-152.

Belongs to the troponin C family.

In terms of biological role, troponin is the central regulatory protein of striated muscle contraction. Tn consists of three components: Tn-I which is the inhibitor of actomyosin ATPase, Tn-T which contains the binding site for tropomyosin and Tn-C. The binding of calcium to Tn-C abolishes the inhibitory action of Tn on actin filaments. The sequence is that of Troponin C, slow skeletal and cardiac muscles (TNNC1) from Bos taurus (Bovine).